An 805-amino-acid polypeptide reads, in one-letter code: Polyribonucleotide nucleotidyltransferase (805 aa).

Mg(2+) contacts are provided by Asp491 and Asp497. The KH domain maps to 558–617; it reads PRMESMIIDKNKIKNVIGTGGKNVREICEKTGVKIEISQDGTVMIYAVSRDAVEEAKNMI. An S1 motif domain is found at 627–694; sequence GKVFSGVISE…DKDHVQLSMR (68 aa). The segment at 702–805 is disordered; sequence DLLEHESYSS…GGGNKKPRFF (104 aa). Residues 709–721 are compositionally biased toward polar residues; the sequence is YSSSKKNGPQSGD.

Belongs to the polyribonucleotide nucleotidyltransferase family. The cofactor is Mg(2+).

The protein resides in the cytoplasm. It catalyses the reaction RNA(n+1) + phosphate = RNA(n) + a ribonucleoside 5'-diphosphate. Involved in mRNA degradation. Catalyzes the phosphorolysis of single-stranded polyribonucleotides processively in the 3'- to 5'-direction. This chain is Polyribonucleotide nucleotidyltransferase, found in Anaplasma marginale (strain St. Maries).